Here is a 201-residue protein sequence, read N- to C-terminus: Thymidylate kinase (201 aa).

Position 7-14 (glycine 7–threonine 14) interacts with ATP.

This sequence belongs to the thymidylate kinase family.

It catalyses the reaction dTMP + ATP = dTDP + ADP. Functionally, phosphorylation of dTMP to form dTDP in both de novo and salvage pathways of dTTP synthesis. The protein is Thymidylate kinase of Acholeplasma laidlawii (strain PG-8A).